A 279-amino-acid chain; its full sequence is Nitrogenase vanadium-iron protein alpha chain (279 aa).

Positions 5, 31, and 94 each coordinate [8Fe-7S] cluster. Position 213 (cysteine 213) interacts with [7Fe-V-9S-C-homocitryl] cluster.

It belongs to the NifD/NifK/NifE/NifN family. Hexamer of two alpha, two beta, and two delta chains. [8Fe-7S] cluster serves as cofactor. The cofactor is [7Fe-V-9S-C-homocitryl] cluster.

The enzyme catalyses N2 + 8 reduced [2Fe-2S]-[ferredoxin] + 16 ATP + 16 H2O = H2 + 8 oxidized [2Fe-2S]-[ferredoxin] + 2 NH4(+) + 16 ADP + 16 phosphate + 6 H(+). In terms of biological role, this vanadium-iron protein is part of the nitrogenase complex that catalyzes the key enzymatic reactions in nitrogen fixation. This chain is Nitrogenase vanadium-iron protein alpha chain (vnfD), found in Azotobacter salinestris.